A 521-amino-acid polypeptide reads, in one-letter code: Glutamyl-tRNA(Gln) amidotransferase subunit A (521 aa).

Catalysis depends on charge relay system residues Lys79 and Ser187. Ser211 acts as the Acyl-ester intermediate in catalysis.

This sequence belongs to the amidase family. GatA subfamily. Heterotrimer of A, B and C subunits.

The catalysed reaction is L-glutamyl-tRNA(Gln) + L-glutamine + ATP + H2O = L-glutaminyl-tRNA(Gln) + L-glutamate + ADP + phosphate + H(+). In terms of biological role, allows the formation of correctly charged Gln-tRNA(Gln) through the transamidation of misacylated Glu-tRNA(Gln) in organisms which lack glutaminyl-tRNA synthetase. The reaction takes place in the presence of glutamine and ATP through an activated gamma-phospho-Glu-tRNA(Gln). The chain is Glutamyl-tRNA(Gln) amidotransferase subunit A from Mesorhizobium japonicum (strain LMG 29417 / CECT 9101 / MAFF 303099) (Mesorhizobium loti (strain MAFF 303099)).